The chain runs to 429 residues: Enolase (429 aa).

Gln-163 contacts (2R)-2-phosphoglycerate. Catalysis depends on Glu-205, which acts as the Proton donor. Mg(2+)-binding residues include Asp-242, Glu-286, and Asp-313. 4 residues coordinate (2R)-2-phosphoglycerate: Lys-338, Arg-367, Ser-368, and Lys-389. Residue Lys-338 is the Proton acceptor of the active site.

It belongs to the enolase family. Mg(2+) is required as a cofactor.

It is found in the cytoplasm. The protein resides in the secreted. Its subcellular location is the cell surface. The catalysed reaction is (2R)-2-phosphoglycerate = phosphoenolpyruvate + H2O. The protein operates within carbohydrate degradation; glycolysis; pyruvate from D-glyceraldehyde 3-phosphate: step 4/5. In terms of biological role, catalyzes the reversible conversion of 2-phosphoglycerate (2-PG) into phosphoenolpyruvate (PEP). It is essential for the degradation of carbohydrates via glycolysis. This is Enolase from Pelobacter propionicus (strain DSM 2379 / NBRC 103807 / OttBd1).